The primary structure comprises 124 residues: MPTIQQLIRTERSRLKAKTKSPALKSCPERRGVCTRVYTSTPKKPNSALRKVARVRLTSGFEVTAYIGGVGHNLQEHSVVLIRGGRVKDLPGVRYHIIRGTLDTAGVKDRRQSRSKYGAKTPKE.

Aspartate 89 carries the 3-methylthioaspartic acid modification. Residues 104–124 (TAGVKDRRQSRSKYGAKTPKE) form a disordered region.

The protein belongs to the universal ribosomal protein uS12 family. As to quaternary structure, part of the 30S ribosomal subunit. Contacts proteins S8 and S17. May interact with IF1 in the 30S initiation complex.

In terms of biological role, with S4 and S5 plays an important role in translational accuracy. Functionally, interacts with and stabilizes bases of the 16S rRNA that are involved in tRNA selection in the A site and with the mRNA backbone. Located at the interface of the 30S and 50S subunits, it traverses the body of the 30S subunit contacting proteins on the other side and probably holding the rRNA structure together. The combined cluster of proteins S8, S12 and S17 appears to hold together the shoulder and platform of the 30S subunit. This Parasynechococcus marenigrum (strain WH8102) protein is Small ribosomal subunit protein uS12.